Here is a 2250-residue protein sequence, read N- to C-terminus: DNA polymerase epsilon catalytic subunit A (2250 aa).

Disordered stretches follow at residues Met1–Ala63, Asn235–Pro259, and Pro1990–Ser2010. Over residues Gly32 to Ala41 the composition is skewed to gly residues. The span at Asp249–Pro259 shows a compositional bias: basic and acidic residues. Positions Pro1990–Pro2000 are enriched in polar residues. The Zn(2+) site is built by Cys2118, Cys2121, Cys2156, and Cys2159. The segment at Cys2118–Cys2159 adopts a CysA-type zinc-finger fold. Residues Cys2190, Cys2193, Cys2205, and Cys2207 each contribute to the [4Fe-4S] cluster site. The CysB motif motif lies at Cys2190 to Cys2207.

Belongs to the DNA polymerase type-B family. Heterotetramer. Consists of 4 subunits: POL2, DPB2, DPB3 and DPB4. [4Fe-4S] cluster is required as a cofactor.

It localises to the nucleus. It catalyses the reaction DNA(n) + a 2'-deoxyribonucleoside 5'-triphosphate = DNA(n+1) + diphosphate. DNA polymerase II participates in chromosomal DNA replication. In Cryptococcus neoformans var. neoformans serotype D (strain JEC21 / ATCC MYA-565) (Filobasidiella neoformans), this protein is DNA polymerase epsilon catalytic subunit A (POL2).